We begin with the raw amino-acid sequence, 966 residues long: Muscular LMNA-interacting protein (966 aa).

Ser129 bears the Phosphoserine mark. Disordered regions lie at residues 132 to 154, 182 to 207, 303 to 337, 354 to 388, 434 to 562, 597 to 684, 785 to 837, and 929 to 966; these read EDEA…IATR, SHPE…TSEQ, LAPE…SLRS, PSPK…LKSP, IKQT…TRPS, KRTC…TPSL, SMHS…SQLT, and SLRD…DSKE. The required for interaction with ISL1 stretch occupies residues 144–810; the sequence is PPGATGNIAT…GSETIKTPTT (667 aa). Polar residues-rich tracts occupy residues 195 to 207 and 325 to 337; these read KHGQ…TSEQ and TSPS…SLRS. 3 stretches are compositionally biased toward low complexity: residues 354–387, 437–455, and 478–497; these read PSPK…GLKS, TPST…TGST, and PLSQ…SYAA. Position 486 is a phosphoserine (Ser486). Positions 507–521 are enriched in polar residues; it reads TLRSSTTPPQSQTDL. Composition is skewed to basic and acidic residues over residues 542 to 555 and 597 to 607; these read GRKD…EKNR and KRTCSQRHSDQ. 2 stretches are compositionally biased toward polar residues: residues 639-649 and 657-684; these read SSLTQALQRSP and GSAT…TPSL. Over residues 785–797 the composition is skewed to low complexity; it reads SMHSSDSPSRPSQ. Ser791 is modified (phosphoserine). The span at 798–810 shows a compositional bias: polar residues; sequence TMLGSETIKTPTT. Residues 825–834 show a composition bias toward low complexity; sequence SSSSSTTSES. The span at 937–946 shows a compositional bias: polar residues; that stretch reads SPTLLSQDTY. Residues 957-966 are compositionally biased toward basic and acidic residues; sequence PEHDTLDSKE.

Directly interacts with LMNA. Interacts with ISL1 (via N-terminal domain); the interaction represses ISL1 transactivator activity. Interactions of ISL1 with MLIP1 and GCN5/KAT2A may be mutually exclusive. As to expression, expressed in cardiomyoctes. Expression is highly reduced in hypertrophic cardiomyocytes.

The protein localises to the nucleus. The protein resides in the nucleus envelope. Its subcellular location is the PML body. It is found in the cytoplasm. It localises to the cytosol. The protein localises to the cell membrane. The protein resides in the sarcolemma. Its function is as follows. Required for myoblast differentiation into myotubes, possibly acting as a transcriptional regulator of the myogenic program. Required for cardiac adaptation to stress through integrated regulation of the AKT/mTOR pathways and FOXO1. Regulates cardiac homeostasis and plays a role in the protection against cardiac hypertrophy. Binds chromatin. May act as a transcriptional cofactor for ISL1, repressing its transcriptional activity. May also repress MYOCD transcriptional activity. This chain is Muscular LMNA-interacting protein, found in Rattus norvegicus (Rat).